The sequence spans 404 residues: uncharacterized protein (404 aa).

2 helical membrane-spanning segments follow: residues 35–55 and 92–112; these read ILFS…FTFL and EDIW…ISSI.

The protein localises to the membrane. This is an uncharacterized protein from Saccharomyces cerevisiae (strain ATCC 204508 / S288c) (Baker's yeast).